Reading from the N-terminus, the 336-residue chain is ATP-dependent 6-phosphofructokinase (336 aa).

ATP is bound at residue Gly11. Residue 21–25 (RAVVR) participates in ADP binding. Residues 72 to 73 (RY) and 102 to 105 (GDGS) each bind ATP. Asp103 lines the Mg(2+) pocket. 125–127 (TID) lines the substrate pocket. The active-site Proton acceptor is Asp127. Arg154 is a binding site for ADP. Substrate-binding positions include Arg162 and 169–171 (MGR). ADP is bound by residues 185–187 (GAD), Lys211, and 213–215 (KKH). Residues Glu222, Arg244, and 250 to 253 (HIQR) contribute to the substrate site.

It belongs to the phosphofructokinase type A (PFKA) family. ATP-dependent PFK group I subfamily. Prokaryotic clade 'B1' sub-subfamily. Homotetramer. Mg(2+) serves as cofactor.

Its subcellular location is the cytoplasm. It carries out the reaction beta-D-fructose 6-phosphate + ATP = beta-D-fructose 1,6-bisphosphate + ADP + H(+). It participates in carbohydrate degradation; glycolysis; D-glyceraldehyde 3-phosphate and glycerone phosphate from D-glucose: step 3/4. With respect to regulation, allosterically activated by ADP and other diphosphonucleosides, and allosterically inhibited by phosphoenolpyruvate. Its function is as follows. Catalyzes the phosphorylation of D-fructose 6-phosphate to fructose 1,6-bisphosphate by ATP, the first committing step of glycolysis. This chain is ATP-dependent 6-phosphofructokinase, found in Streptococcus sanguinis (strain SK36).